Reading from the N-terminus, the 65-residue chain is Small hydrophobic protein (65 aa).

Over 1–20 (MGNTSITIEFTSKFWPYFTL) the chain is Intravirion. An interaction with host BCAP31 region spans residues 6-15 (ITIEFTSKFW). Residues 21-44 (IHMILTLISLLIIITIMIAILNKL) traverse the membrane as a helical; Signal-anchor for type II membrane protein segment. Positions 38 to 43 (IAILNK) are interaction with small-molecule inhibitor. At 45–65 (SEHKTFCNNTLELGQMHQINT) the chain is on the virion surface side. Asparagine 52 carries an N-linked (GlcNAc...) asparagine; by host glycan.

This sequence belongs to the orthopneumovirus small hydrophobic protein family. In terms of assembly, homopentamer forming a funnel-like pore. Interacts with glycoprotein G; this interaction occurs on the surface of virion particles and infected cells. Interacts with host BCAP31 (via C-terminus); this interaction is direct. Post-translationally, four species of SH have been detected in infected cell cytoplasm: a 7.5 kDa non-glycosylated form (SH0), a 13-15 kDa form that contains one or two N-linked carbohydrate side chains of the high-mannose type (SHg), a 21-30 kDa polylactosaminoglycan-modified form of the protein (SHp), and the isoform generated by alternative translational initiation. Of these different forms, SH0 is by far the most abundant protein detected during virus infection. In terms of processing, tyrosine phosphorylated.

It is found in the virion membrane. It localises to the host cell membrane. The protein localises to the host Golgi apparatus membrane. Its subcellular location is the host endoplasmic reticulum membrane. Its activity is regulated as follows. Channel activity is inhibited by copper. Also inhibited by small-molecule pyronin B. Viroporin that forms a homopentameric ion channel displaying low ion selectivity. May play a role in virus morphogenesis and pathogenicity at various stages of the viral life cycle. Accumulates at the membrane of the Golgi apparatus in infected cells and may facilitate virus release by modifying the secretory pathway. May enhance host membrane permeability and disrupt cellular ion homeostasis, which can be sensed as damage-associated molecular patterns/danger signals, triggering NLRP3 inflammasome activation and inflammatory immune response. Also inhibits host TNFA-mediated signaling pathway and may delay apoptosis, allowing time for the virus to replicate. This Homo sapiens (Human) protein is Small hydrophobic protein.